A 63-amino-acid chain; its full sequence is ATP synthase subunit epsilon, mitochondrial (63 aa).

F-type ATP synthases have 2 components, the catalytic core F(1) and the membrane-embedded component F(0), linked together by a central stalk and a peripheral stalk. The central stalk, also called rotor shaft, is often seen as part of F(1). The peripheral stalk is seen as part of F(0). F(0) contains the membrane channel next to the rotor. F-type ATP synthases form dimers but each monomer functions independently in ATP generation. The dimer consists of 18 different polypeptides: ATP1 (subunit alpha, part of F(1), 3 molecules per monomer), ATP2 (subunit beta, part of F(1), 3 molecules per monomer), ATP3 (subunit gamma, part of the central stalk), ATP4 (subunit b, part of the peripheral stalk), ATP5/OSCP (subunit 5/OSCP, part of the peripheral stalk), ATP6 (subunit a, part of the peripheral stalk), ATP7 (subunit d, part of the peripheral stalk), ATP8 (subunit 8, part of the peripheral stalk), OLI1 (subunit c, part of the rotor, 10 molecules per monomer), ATP14 (subunit h, part of the peripheral stalk), ATP15 (subunit epsilon, part of the central stalk), ATP16 (subunit delta, part of the central stalk), ATP17 (subunit f, part of the peripheral stalk), ATP18 (subunit i/j, part of the peripheral stalk). Dimer-specific subunits are ATP19 (subunit k, at interface between monomers), ATP20 (subunit g, at interface between monomers), TIM11 (subunit e, at interface between monomers). Also contains subunit L.

The protein resides in the mitochondrion inner membrane. In terms of biological role, mitochondrial membrane ATP synthase (F(1)F(0) ATP synthase or Complex V) produces ATP from ADP in the presence of a proton gradient across the membrane which is generated by electron transport complexes of the respiratory chain. F-type ATP synthases consist of two structural domains, F(1) - containing the extramembraneous catalytic core, and F(0) - containing the membrane proton channel, linked together by a central stalk and a peripheral stalk. During catalysis, ATP synthesis in the catalytic domain of F(1) is coupled via a rotary mechanism of the central stalk subunits to proton translocation. Part of the complex F(1) domain and the central stalk which is part of the complex rotary element. Rotation of the central stalk against the surrounding alpha/ATP1(3)beta/ATP2(3) subunits leads to hydrolysis of ATP in three separate catalytic sites on the beta/ATP2 subunits. The polypeptide is ATP synthase subunit epsilon, mitochondrial (Pichia angusta (Yeast)).